A 239-amino-acid polypeptide reads, in one-letter code: Putative 3-methyladenine DNA glycosylase (239 aa).

Belongs to the DNA glycosylase MPG family.

In Pseudomonas aeruginosa (strain LESB58), this protein is Putative 3-methyladenine DNA glycosylase.